Consider the following 418-residue polypeptide: Serpin A3-8 (418 aa).

An N-terminal signal peptide occupies residues 1 to 25 (MRAERMSPLLALGLLVSGLCSRVHC). Asn103, Asn183, Asn233, and Asn268 each carry an N-linked (GlcNAc...) asparagine glycan.

This sequence belongs to the serpin family. Homodimer.

The protein localises to the cytoplasmic vesicle. Its subcellular location is the secretory vesicle. It localises to the chromaffin granule. It is found in the secreted. Its function is as follows. Serine protease inhibitor. This Bos taurus (Bovine) protein is Serpin A3-8.